Reading from the N-terminus, the 356-residue chain is Protein RecA (356 aa).

79 to 86 (GPESSGKT) is a binding site for ATP.

Belongs to the RecA family.

It is found in the cytoplasm. Can catalyze the hydrolysis of ATP in the presence of single-stranded DNA, the ATP-dependent uptake of single-stranded DNA by duplex DNA, and the ATP-dependent hybridization of homologous single-stranded DNAs. It interacts with LexA causing its activation and leading to its autocatalytic cleavage. This chain is Protein RecA, found in Borrelia hermsii (strain HS1 / DAH).